The chain runs to 209 residues: Small ribosomal subunit protein uS5 (209 aa).

In terms of domain architecture, S5 DRBM spans 48 to 111 (LEDEVLDINM…DAAKLNITYI (64 aa)).

It belongs to the universal ribosomal protein uS5 family. In terms of assembly, part of the 30S ribosomal subunit. Contacts protein S4.

In terms of biological role, with S4 and S12 plays an important role in translational accuracy. The polypeptide is Small ribosomal subunit protein uS5 (Methanosarcina acetivorans (strain ATCC 35395 / DSM 2834 / JCM 12185 / C2A)).